Reading from the N-terminus, the 131-residue chain is S-adenosylmethionine decarboxylase proenzyme (131 aa).

Catalysis depends on serine 64, which acts as the Schiff-base intermediate with substrate; via pyruvic acid. Serine 64 carries the post-translational modification Pyruvic acid (Ser); by autocatalysis. Catalysis depends on histidine 69, which acts as the Proton acceptor; for processing activity. Residue cysteine 84 is the Proton donor; for catalytic activity of the active site.

The protein belongs to the prokaryotic AdoMetDC family. Type 1 subfamily. Heterotetramer of two alpha and two beta chains arranged as a dimer of alpha/beta heterodimers. Requires pyruvate as cofactor. Is synthesized initially as an inactive proenzyme. Formation of the active enzyme involves a self-maturation process in which the active site pyruvoyl group is generated from an internal serine residue via an autocatalytic post-translational modification. Two non-identical subunits are generated from the proenzyme in this reaction, and the pyruvate is formed at the N-terminus of the alpha chain, which is derived from the carboxyl end of the proenzyme. The post-translation cleavage follows an unusual pathway, termed non-hydrolytic serinolysis, in which the side chain hydroxyl group of the serine supplies its oxygen atom to form the C-terminus of the beta chain, while the remainder of the serine residue undergoes an oxidative deamination to produce ammonia and the pyruvoyl group blocking the N-terminus of the alpha chain.

It catalyses the reaction S-adenosyl-L-methionine + H(+) = S-adenosyl 3-(methylsulfanyl)propylamine + CO2. Its pathway is amine and polyamine biosynthesis; S-adenosylmethioninamine biosynthesis; S-adenosylmethioninamine from S-adenosyl-L-methionine: step 1/1. Functionally, catalyzes the decarboxylation of S-adenosylmethionine to S-adenosylmethioninamine (dcAdoMet), the propylamine donor required for the synthesis of the polyamines spermine and spermidine from the diamine putrescine. This chain is S-adenosylmethionine decarboxylase proenzyme, found in Thermoplasma acidophilum (strain ATCC 25905 / DSM 1728 / JCM 9062 / NBRC 15155 / AMRC-C165).